We begin with the raw amino-acid sequence, 60 residues long: Large ribosomal subunit protein bL32 (60 aa).

Belongs to the bacterial ribosomal protein bL32 family.

This chain is Large ribosomal subunit protein bL32, found in Latilactobacillus sakei subsp. sakei (strain 23K) (Lactobacillus sakei subsp. sakei).